Reading from the N-terminus, the 271-residue chain is Formamidopyrimidine-DNA glycosylase (271 aa).

Pro-2 functions as the Schiff-base intermediate with DNA in the catalytic mechanism. The active-site Proton donor is Glu-3. The active-site Proton donor; for beta-elimination activity is Lys-58. His-92, Arg-111, and Arg-152 together coordinate DNA. The FPG-type zinc-finger motif lies at 237-271 (FVYGRQQQPCKQCGSLLRQTTIRQRTTVWCGHCQG). The active-site Proton donor; for delta-elimination activity is the Arg-261.

This sequence belongs to the FPG family. In terms of assembly, monomer. Zn(2+) serves as cofactor.

The catalysed reaction is Hydrolysis of DNA containing ring-opened 7-methylguanine residues, releasing 2,6-diamino-4-hydroxy-5-(N-methyl)formamidopyrimidine.. The enzyme catalyses 2'-deoxyribonucleotide-(2'-deoxyribose 5'-phosphate)-2'-deoxyribonucleotide-DNA = a 3'-end 2'-deoxyribonucleotide-(2,3-dehydro-2,3-deoxyribose 5'-phosphate)-DNA + a 5'-end 5'-phospho-2'-deoxyribonucleoside-DNA + H(+). Functionally, involved in base excision repair of DNA damaged by oxidation or by mutagenic agents. Acts as a DNA glycosylase that recognizes and removes damaged bases. Has a preference for oxidized purines, such as 7,8-dihydro-8-oxoguanine (8-oxoG). Has AP (apurinic/apyrimidinic) lyase activity and introduces nicks in the DNA strand. Cleaves the DNA backbone by beta-delta elimination to generate a single-strand break at the site of the removed base with both 3'- and 5'-phosphates. The polypeptide is Formamidopyrimidine-DNA glycosylase (mutM1) (Xylella fastidiosa (strain 9a5c)).